Consider the following 499-residue polypeptide: Probable cytosol aminopeptidase (499 aa).

The Mn(2+) site is built by Lys267 and Asp272. The active site involves Lys279. Residues Asp290, Asp349, and Glu351 each coordinate Mn(2+). The active site involves Arg353.

Belongs to the peptidase M17 family. Mn(2+) serves as cofactor.

It is found in the cytoplasm. It carries out the reaction Release of an N-terminal amino acid, Xaa-|-Yaa-, in which Xaa is preferably Leu, but may be other amino acids including Pro although not Arg or Lys, and Yaa may be Pro. Amino acid amides and methyl esters are also readily hydrolyzed, but rates on arylamides are exceedingly low.. The catalysed reaction is Release of an N-terminal amino acid, preferentially leucine, but not glutamic or aspartic acids.. Its function is as follows. Presumably involved in the processing and regular turnover of intracellular proteins. Catalyzes the removal of unsubstituted N-terminal amino acids from various peptides. This chain is Probable cytosol aminopeptidase, found in Alkaliphilus oremlandii (strain OhILAs) (Clostridium oremlandii (strain OhILAs)).